A 360-amino-acid polypeptide reads, in one-letter code: Flavone O-methyltransferase 1 (360 aa).

Substrate is bound at residue 127–133; that stretch reads MNQDKVL. The tract at residues 159–177 is substrate binding; the sequence is AFEYHGTDPRFNRVFNEGM. Residues glycine 205, aspartate 228, aspartate 248, methionine 249, and lysine 262 each contribute to the S-adenosyl-L-methionine site. The active-site Proton acceptor is histidine 266.

It belongs to the class I-like SAM-binding methyltransferase superfamily. Cation-independent O-methyltransferase family. COMT subfamily. As to quaternary structure, homodimer.

In terms of biological role, flavone-specific O-methyltransferase with a preference for flavones &gt; flavonols. Active with tricetin, luteolin, quercitin and eriodictyol. Very low activity with phenylpropanoids (5-hydroxyferulic acid and caffeic acid). Catalyzes the sequential O-methylation of tricetin via 3'-O-methyltricetin, 3',5'-O-methyltricetin to 3',4',5'-O-trimethyltricetin. This is Flavone O-methyltransferase 1 (OMT1) from Triticum aestivum (Wheat).